The chain runs to 482 residues: Anthocyanin 3'-O-beta-glucosyltransferase (482 aa).

His-16 functions as the Proton acceptor in the catalytic mechanism. Residue His-16 coordinates an anthocyanidin. The active-site Charge relay is the Asp-119. 7 residues coordinate UDP-alpha-D-glucose: Ala-349, Gln-351, His-366, Trp-369, Asn-370, Ser-371, and Glu-374. Ala-389 contacts an anthocyanidin. 2 residues coordinate UDP-alpha-D-glucose: Glu-390 and Gln-391.

Belongs to the UDP-glycosyltransferase family. In terms of processing, the N-terminus is blocked. Abundant in petals and barely detected in leaves.

The enzyme catalyses delphinidin 3,5-bis-O-beta-D-glucoside + UDP-alpha-D-glucose = delphinidin 3,3',5-tri-O-beta-D-glucoside + UDP + H(+). Functionally, specifically glucosylates the 3'-hydroxy group of delphinidin 3,5-di-O-glucoside to produce gentiodelphin. Shows a strict specificity for UDP-glucose as donor. This Gentiana triflora (Clustered gentian) protein is Anthocyanin 3'-O-beta-glucosyltransferase.